The primary structure comprises 50 residues: Sperm protamine P1 (50 aa).

Disulfide bonds link Cys7/Cys15 and Cys38/Cys46.

This sequence belongs to the protamine P1 family. As to quaternary structure, cross-linked by interchain disulfide bonds around the DNA-helix. As to expression, testis.

Its subcellular location is the nucleus. It localises to the chromosome. In terms of biological role, protamines substitute for histones in the chromatin of sperm during the haploid phase of spermatogenesis. They compact sperm DNA into a highly condensed, stable and inactive complex. The protein is Sperm protamine P1 (PRM1) of Equus caballus (Horse).